Consider the following 3387-residue polypeptide: MNQRKKVARPPFNMLKRERNRVSTPQGLVKRFSTGLFSGKGPLRMVLAFITFLRVLSIPPTAGILKRWGQLKKNKAIKILTGFRKEIGRMLNILNGRKRSTITLLCLIPTVMAFHLSTRDGEPLMIVAKHERGRPLLFKTTEGINKCTLIAMDLGEMCEDTVTYKCPLLVNTEPEDIDCWCNLTSAWVMYGTCTQSGERRREKRSVALTPHSGMGLETRAETWMSSEGAWKHAQRVESWILRNPGFALLAGFMAYMIGQTGIQRTVFFILMMLVAPSYGMRCVGVGNRDFVEGVSGGAWVDLVLEHGGCVTTMAQGKPTLDFELIKTTAKEVALLRTYCIEASISNITTATRCPTQGEPYLKEEQDQQYICRRDMVDRGWGNGCGLFGKGGVVTCAKFSCSGKITGNLVQIENLEYTVVVTVHNGDTHAVGNDTSNHGVTATITPRSPSVEVKLPDYGELTLDCEPRSGIDFNEMILMKMKTKTWLVHKQWFLDLPLPWTAGADTLEVHWNHKERMVTFKVPHAKRQDVTVLGSQEGAMHSALAGATEVDSGDGNHMFAGHLKCKVRMEKLRIKGMSYTMCSGKFSIDKEMAETQHGTTVVKVKYEGTGAPCKVPIEIRDVNKEKVVGRIISSTPFAENTNSVTNIELEPPFGDSYIVIGVGDSALTLHWFRKGSSIGKMFESTYRGAKRMAILGETAWDFGSVGGLLTSLGKAVHQVFGSVYTTMFGGVSWMVRILIGLLVLWIGTNSRNTSMAMSCIAVGGITLFLGFTVHADMGCAVSWSGKELKCGSGIFVIDNVHTWTEQYKFQPESPARLASAILNAHKDGVCGIRSTTRLENVMWKQITNELNYVLWEGGHDLTVVAGDVKGVLSKGKRALAPPVNDLKYSWKTWGKAKIFTPETRNSTFLVDGPDTSECPNERRAWNFLEVEDYGFGMFTTNIWMKFREGSSEVCDHRLMSAAIKDQKAVHADMGYWIESSKNQTWQIEKASLIEVKTCLWPKTHTLWSNGVLESQMLIPKAYAGPISQHNYRQGYATQTVGPWHLGKLEIDFGECPGTTVTIQEDCDHRGPSLRTTTASGKLVTQWCCRSCTMPPLRFLGEDGCWYGMEIRPLNEKEENMVKSQVSAGQGTSETFSMGLLCLTLFVEECLRRRVTRKHMILVVVTTLCAIILGGLTWMDLLRALIMLGDTMSGRMGGQIHLAIMAVFKMSPGYVLGIFLRKLTSRETALMVIGMAMTTVLSIPHDLMEFIDGISLGLILLKMVTHFDNTQVGTLALSLTFIKSTMPLVMAWRTIMAVLFVVTLIPLCRTSCLQKQSHWVEITALILGAQALPVYLMTLMKGASKRSWPLNEGIMAVGLVSLLGSALLKNDVPLAGPMVAGGLLLAAYVMSGSSADLSLEKAANVQWDEMADITGSSPIIEVKQDEDGSFSIRDVEETNMITLLVKLALITVSGLYPLAIPVTMTLWYMWQVKTQRSGALWDVPSPAAAQKATLTEGVYRIMQRGLFGKTQVGVGIHMEGVFHTMWHVTRGSVICHESGRLEPSWADVRNDMISYGGGWRLGDKWDKEEDVQVLAIEPGKNPKHVQTKPGLFKTLTGEIGAVTLDFKPGTSGSPIINRKGKVIGLYGNGVVTKSGDYVSAITQAERIGEPDYEVDEDIFRKKRLTIMDLHPGAGKTKRILPSIVREALKRRLRTLILAPTRVVAAEMEEALRGLPIRYQTPAVKSEHTGREIVDLMCHATFTTRLLSSTRVPNYNLIVMDEAHFTDPSSVAARGYISTRVEMGEAAAIFMTATPPGTTDPFPQSNSPIEDIEREIPERSWNTGFDWITDYQGKTVWFVPSIKAGNDIANCLRKSGKKVIQLSRKTFDTEYPKTKLTDWDFVVTTDISEMGANFRAGRVIDPRRCLKPVILTDGPERVILAGPIPVTPASAAQRRGRIGRNPAQEDDQYVFSGDPLRNDEDHAHWTEAKMLLDNIYTPEGIIPTLFGPEREKTQAIDGEFRLRGEQRKTFVELMRRGDLPVWLSYKVASAGISYKDREWCFTGERNNQILEENMEVEIWTREGEKKKLRPKWLDARVYADPMALKDFKEFASGRKSITLDILTEIASLPTYLSSRAKLALDNIVMLHTTERGGKAYQHALNELPESLETLMLVALLGAMTAGIFLFFMQGKGIGKLSMGLIAIAVASGLLWVAEIQPQWIAASIILEFFLMVLLVPEPEKQRTPQDNQLIYVILTILTIIALVAANEMGLIEKTKTDFGFYQAKTETTILDVDLRPASAWTLYAVATTILTPMLRHTIENTSANLSLAAIANQAAVLMGLGKGWPLHRMDLGVPLLAMGCYSQVNPTTLTASLVMLLVHYAIIGPGLQAKATREAQKRTAAGIMKNPTVDGITVIDLEPISYDPKFEKQLGQVMLLVLCAGQLLLMRTTWAFCEVLTLATGPILTLWEGNPGRFWNTTIAVSTANIFRGSYLAGAGLAFSLIKNAQTPRRGTGTTGETLGEKWKRQLNSLDRKEFEEYKRSGILEVDRTEAKSALKDGSKIKYAVSRGTSKIRWIVERGMVKPKGKVVDLGCGRGGWSYYMATLKNVTEVKGYTKGGPGHEEPIPMATYGWNLVKLHSGVDVFYKPTEQVDTLLCDIGESSSNPTIEEGRTLRVLKMVEPWLSSKPEFCIKVLNPYMPTVIEELEKLQRKHGGSLVRCPLSRNSTHEMYWVSGVSGNIVSSVNTTSKMLLNRFTTRHRKPTYEKDADLGAGTRSVSTETEKPDMTIIGRRLQRLQEEHKETWHYDHENPYRTWAYHGSYEAPSTGSASSMVNGVVKLLTKPWDVVPMVTQLAMTDTTPFGQQRVFKEKVDTRTPQPKPGTRVVMTTTANWLWALLGRKKNPRLCTREEFISKVRSNAAIGAVFQEEQGWTSASEAVNDSRFWELVDKERALHQEGKCESCVYNMMGKREKKLGEFGRAKGSRAIWYMWLGARFLEFEALGFLNEDHWFGRENSWSGVEGEGLHRLGYILEDIDKKDGDLIYADDTAGWDTRITEDDLLNEELITEQMAPHHKILAKAIFKLTYQNKVVKVLRPTPKGAVMDIISRKDQRGSGQVGTYGLNTFTNMEVQLIRQMEAEGVITRDDMHNPKGLKERVEKWLKECGVDRLKRMAISGDDCVVKPLDERFSTSLLFLNDMGKVRKDIPQWEPSKGWKNWQEVPFCSHHFHKIFMKDGRSLVVPCRNQDELIGRARISQGAGWSLRETACLGKAYAQMWSLMYFHRRDLRLASMAICSAVPTEWFPTSRTTWSIHAHHQWMTTEDMLKVWNRVWIEDNPNMIDKTPVHSWEDIPYLGKREDLWCGSLIGLSSRATWAKNIQTAITQVRNLIGKEEYVDYMPVMKRYSAHFESEGVL.

At 1-100 (MNQRKKVARP…LNILNGRKRS (100 aa)) the chain is on the cytoplasmic side. The tract at residues 36-71 (LFSGKGPLRMVLAFITFLRVLSIPPTAGILKRWGQL) is hydrophobic; homodimerization of capsid protein C. Residues 100–113 (STITLLCLIPTVMA) constitute a propeptide, ER anchor for the capsid protein C, removed in mature form by serine protease NS3. Residues 101–117 (TITLLCLIPTVMAFHLS) form a helical membrane-spanning segment. Residues 118 to 237 (TRDGEPLMIV…GAWKHAQRVE (120 aa)) lie on the Extracellular side of the membrane. Asparagine 182 carries N-linked (GlcNAc...) asparagine; by host glycosylation. A helical transmembrane segment spans residues 238 to 258 (SWILRNPGFALLAGFMAYMIG). Over 259 to 265 (QTGIQRT) the chain is Cytoplasmic. A helical transmembrane segment spans residues 266–279 (VFFILMMLVAPSYG). Over 280 to 725 (MRCVGVGNRD…HQVFGSVYTT (446 aa)) the chain is Extracellular. 4 disulfide bridges follow: cysteine 282-cysteine 309, cysteine 339-cysteine 400, cysteine 353-cysteine 384, and cysteine 371-cysteine 395. N-linked (GlcNAc...) asparagine; by host glycosylation occurs at asparagine 346. Residues 377–390 (DRGWGNGCGLFGKG) are fusion peptide. Residue asparagine 432 is glycosylated (N-linked (GlcNAc...) asparagine; by host). 2 cysteine pairs are disulfide-bonded: cysteine 464–cysteine 564 and cysteine 581–cysteine 612. A helical transmembrane segment spans residues 726 to 746 (MFGGVSWMVRILIGLLVLWIG). The Cytoplasmic segment spans residues 747–753 (TNSRNTS). A helical transmembrane segment spans residues 754 to 774 (MAMSCIAVGGITLFLGFTVHA). The Extracellular portion of the chain corresponds to 775–1194 (DMGCAVSWSG…MLGDTMSGRM (420 aa)). Intrachain disulfides connect cysteine 778–cysteine 789, cysteine 829–cysteine 917, cysteine 953–cysteine 997, cysteine 1054–cysteine 1103, cysteine 1065–cysteine 1087, and cysteine 1086–cysteine 1090. Residues asparagine 904 and asparagine 981 are each glycosylated (N-linked (GlcNAc...) asparagine; by host). A helical membrane pass occupies residues 1195–1218 (GGQIHLAIMAVFKMSPGYVLGIFL). At 1219–1224 (RKLTSR) the chain is on the lumenal side. A helical membrane pass occupies residues 1225-1243 (ETALMVIGMAMTTVLSIPH). The Cytoplasmic segment spans residues 1244–1267 (DLMEFIDGISLGLILLKMVTHFDN). The chain crosses the membrane as a helical span at residues 1268–1288 (TQVGTLALSLTFIKSTMPLVM). Position 1289 (alanine 1289) is a topological domain, lumenal. A helical membrane pass occupies residues 1290 to 1308 (WRTIMAVLFVVTLIPLCRT). Residues 1309–1316 (SCLQKQSH) lie on the Lumenal side of the membrane. The chain crosses the membrane as a helical span at residues 1317-1337 (WVEITALILGAQALPVYLMTL). Topologically, residues 1338–1345 (MKGASKRS) are cytoplasmic. Residues 1346 to 1366 (WPLNEGIMAVGLVSLLGSALL) form a helical membrane-spanning segment. Residues 1367 to 1369 (KND) are Lumenal-facing. The helical transmembrane segment at 1370 to 1390 (VPLAGPMVAGGLLLAAYVMSG) threads the bilayer. Over 1391–1437 (SSADLSLEKAANVQWDEMADITGSSPIIEVKQDEDGSFSIRDVEETN) the chain is Cytoplasmic. Positions 1397–1436 (LEKAANVQWDEMADITGSSPIIEVKQDEDGSFSIRDVEET) are interacts with and activates NS3 protease. The segment at residues 1438-1458 (MITLLVKLALITVSGLYPLAI) is an intramembrane region (helical). At 1459–2143 (PVTMTLWYMW…QHALNELPES (685 aa)) the chain is on the cytoplasmic side. In terms of domain architecture, Peptidase S7 spans 1475 to 1652 (SGALWDVPSP…ERIGEPDYEV (178 aa)). Catalysis depends on charge relay system; for serine protease NS3 activity residues histidine 1525, aspartate 1549, and serine 1609. One can recognise a Helicase ATP-binding domain in the interval 1654 to 1810 (EDIFRKKRLT…QSNSPIEDIE (157 aa)). An important for RNA-binding region spans residues 1658-1661 (RKKR). 1667 to 1674 (LHPGAGKT) contributes to the ATP binding site. Residues 1758–1761 (DEAH) carry the DEAH box motif. The 168-residue stretch at 1820–1987 (TGFDWITDYQ…IIPTLFGPER (168 aa)) folds into the Helicase C-terminal domain. Position 1862 is an N6-acetyllysine; by host (lysine 1862). The helical transmembrane segment at 2144–2164 (LETLMLVALLGAMTAGIFLFF) threads the bilayer. The Lumenal segment spans residues 2165-2169 (MQGKG). Residues 2170–2190 (IGKLSMGLIAIAVASGLLWVA) constitute an intramembrane region (helical). A topological domain (lumenal) is located at residue glutamate 2191. Residues 2192–2212 (IQPQWIAASIILEFFLMVLLV) traverse the membrane as a helical segment. Over 2213–2225 (PEPEKQRTPQDNQ) the chain is Cytoplasmic. The chain crosses the membrane as a helical span at residues 2226-2246 (LIYVILTILTIIALVAANEMG). The Lumenal segment spans residues 2247-2270 (LIEKTKTDFGFYQAKTETTILDVD). The segment at residues 2271–2291 (LRPASAWTLYAVATTILTPML) is an intramembrane region (helical). The Lumenal segment spans residues 2292-2301 (RHTIENTSAN). N-linked (GlcNAc...) asparagine; by host glycosylation is found at asparagine 2297 and asparagine 2301. An intramembrane region (helical) is located at residues 2302–2322 (LSLAAIANQAAVLMGLGKGWP). The Lumenal portion of the chain corresponds to 2323 to 2343 (LHRMDLGVPLLAMGCYSQVNP). Residues 2344 to 2364 (TTLTASLVMLLVHYAIIGPGL) traverse the membrane as a helical segment. Over 2365-2409 (QAKATREAQKRTAAGIMKNPTVDGITVIDLEPISYDPKFEKQLGQ) the chain is Cytoplasmic. Residues 2410–2430 (VMLLVLCAGQLLLMRTTWAFC) traverse the membrane as a helical segment. The Lumenal portion of the chain corresponds to 2431–2455 (EVLTLATGPILTLWEGNPGRFWNTT). Residue asparagine 2453 is glycosylated (N-linked (GlcNAc...) asparagine; by host). A helical membrane pass occupies residues 2456–2476 (IAVSTANIFRGSYLAGAGLAF). Residues 2477–3387 (SLIKNAQTPR…SAHFESEGVL (911 aa)) are Cytoplasmic-facing. One can recognise an mRNA cap 0-1 NS5-type MT domain in the interval 2489-2751 (TGTTGETLGE…DADLGAGTRS (263 aa)). Position 2543 (serine 2543) interacts with S-adenosyl-L-methionine. Serine 2543 bears the Phosphoserine mark. The active-site For 2'-O-MTase activity is the lysine 2548. The SUMO-interacting motif signature appears at 2564-2567 (VVDL). S-adenosyl-L-methionine is bound by residues glycine 2573, tryptophan 2574, threonine 2591, lysine 2592, aspartate 2618, and valine 2619. The active-site For 2'-O-MTase activity is aspartate 2633. S-adenosyl-L-methionine is bound at residue isoleucine 2634. Active-site for 2'-O-MTase activity residues include lysine 2668 and glutamate 2704. An S-adenosyl-L-methionine-binding site is contributed by tyrosine 2706. The Zn(2+) site is built by glutamate 2925, histidine 2929, cysteine 2934, and cysteine 2937. The 151-residue stretch at 3016 to 3166 (LIYADDTAGW…PLDERFSTSL (151 aa)) folds into the RdRp catalytic domain. Residues histidine 3200, cysteine 3216, and cysteine 3335 each coordinate Zn(2+).

In the N-terminal section; belongs to the class I-like SAM-binding methyltransferase superfamily. mRNA cap 0-1 NS5-type methyltransferase family. As to quaternary structure, homodimer. Interacts (via N-terminus) with host EXOC1 (via C-terminus); this interaction results in EXOC1 degradation through the proteasome degradation pathway. In terms of assembly, forms heterodimers with envelope protein E in the endoplasmic reticulum and Golgi. Homodimer; in the endoplasmic reticulum and Golgi. Interacts with protein prM. Interacts with non-structural protein 1. As to quaternary structure, homodimer; Homohexamer when secreted. Interacts with envelope protein E. In terms of assembly, interacts (via N-terminus) with serine protease NS3. Forms a heterodimer with serine protease NS3. May form homooligomers. As to quaternary structure, forms a heterodimer with NS2B. Interacts with NS4B. Interacts with unphosphorylated RNA-directed RNA polymerase NS5; this interaction stimulates RNA-directed RNA polymerase NS5 guanylyltransferase activity. Interacts with host SHFL. In terms of assembly, interacts with host MAVS; this interaction inhibits the synthesis of IFN-beta. Interacts with host SHFL. Interacts with host AUP1; the interaction occurs in the presence of Dengue virus NS4B and induces lipophagy which facilitates production of virus progeny particles. Interacts with serine protease NS3. As to quaternary structure, homodimer. Interacts with host STAT2; this interaction inhibits the phosphorylation of the latter, and, when all viral proteins are present (polyprotein), targets STAT2 for degradation. Interacts with serine protease NS3. Interacts with host PAF1 complex; the interaction may prevent the recruitment of the PAF1 complex to interferon-responsive genes, and thus reduces the immune response. In terms of processing, specific enzymatic cleavages in vivo yield mature proteins. Cleavages in the lumen of endoplasmic reticulum are performed by host signal peptidase, whereas cleavages in the cytoplasmic side are performed by serine protease NS3. Signal cleavage at the 2K-4B site requires a prior NS3 protease-mediated cleavage at the 4A-2K site. Post-translationally, cleaved in post-Golgi vesicles by a host furin, releasing the mature small envelope protein M, and peptide pr. This cleavage is incomplete as up to 30% of viral particles still carry uncleaved prM. N-glycosylated. In terms of processing, N-glycosylated. The excreted form is glycosylated and this is required for efficient secretion of the protein from infected cells. Post-translationally, acetylated by host KAT5. Acetylation modulates NS3 RNA-binding and unwinding activities and plays an important positive role for viral replication. Sumoylation of RNA-directed RNA polymerase NS5 increases NS5 protein stability allowing proper viral RNA replication. In terms of processing, phosphorylated on serines residues. This phosphorylation may trigger NS5 nuclear localization.

The protein resides in the virion. It is found in the host nucleus. Its subcellular location is the host cytoplasm. The protein localises to the host perinuclear region. It localises to the secreted. The protein resides in the virion membrane. It is found in the host endoplasmic reticulum membrane. Its subcellular location is the host mitochondrion. It catalyses the reaction Selective hydrolysis of -Xaa-Xaa-|-Yaa- bonds in which each of the Xaa can be either Arg or Lys and Yaa can be either Ser or Ala.. The enzyme catalyses RNA(n) + a ribonucleoside 5'-triphosphate = RNA(n+1) + diphosphate. It carries out the reaction a ribonucleoside 5'-triphosphate + H2O = a ribonucleoside 5'-diphosphate + phosphate + H(+). The catalysed reaction is ATP + H2O = ADP + phosphate + H(+). It catalyses the reaction a 5'-end (5'-triphosphoguanosine)-ribonucleoside in mRNA + S-adenosyl-L-methionine = a 5'-end (N(7)-methyl 5'-triphosphoguanosine)-ribonucleoside in mRNA + S-adenosyl-L-homocysteine. The enzyme catalyses a 5'-end (N(7)-methyl 5'-triphosphoguanosine)-ribonucleoside in mRNA + S-adenosyl-L-methionine = a 5'-end (N(7)-methyl 5'-triphosphoguanosine)-(2'-O-methyl-ribonucleoside) in mRNA + S-adenosyl-L-homocysteine + H(+). Plays a role in virus budding by binding to the cell membrane and gathering the viral RNA into a nucleocapsid that forms the core of a mature virus particle. During virus entry, may induce genome penetration into the host cytoplasm after hemifusion induced by the surface proteins. Can migrate to the cell nucleus where it modulates host functions. Overcomes the anti-viral effects of host EXOC1 by sequestering and degrading the latter through the proteasome degradation pathway. Its function is as follows. Inhibits RNA silencing by interfering with host Dicer. Functionally, prevents premature fusion activity of envelope proteins in trans-Golgi by binding to envelope protein E at pH6.0. After virion release in extracellular space, gets dissociated from E dimers. In terms of biological role, acts as a chaperone for envelope protein E during intracellular virion assembly by masking and inactivating envelope protein E fusion peptide. prM is the only viral peptide matured by host furin in the trans-Golgi network probably to avoid catastrophic activation of the viral fusion activity in acidic Golgi compartment prior to virion release. prM-E cleavage is inefficient, and many virions are only partially matured. These uncleaved prM would play a role in immune evasion. May play a role in virus budding. Exerts cytotoxic effects by activating a mitochondrial apoptotic pathway through M ectodomain. May display a viroporin activity. Its function is as follows. Binds to host cell surface receptor and mediates fusion between viral and cellular membranes. Envelope protein is synthesized in the endoplasmic reticulum in the form of heterodimer with protein prM. They play a role in virion budding in the ER, and the newly formed immature particle is covered with 60 spikes composed of heterodimer between precursor prM and envelope protein E. The virion is transported to the Golgi apparatus where the low pH causes dissociation of PrM-E heterodimers and formation of E homodimers. prM-E cleavage is inefficient, and many virions are only partially matured. These uncleaved prM would play a role in immune evasion. Functionally, involved in immune evasion, pathogenesis and viral replication. Once cleaved off the polyprotein, is targeted to three destinations: the viral replication cycle, the plasma membrane and the extracellular compartment. Essential for viral replication. Required for formation of the replication complex and recruitment of other non-structural proteins to the ER-derived membrane structures. Excreted as a hexameric lipoparticle that plays a role against host immune response. Antagonizing the complement function. Binds to the host macrophages and dendritic cells. Inhibits signal transduction originating from Toll-like receptor 3 (TLR3). In terms of biological role, disrupts the host endothelial glycocalyx layer of host pulmonary microvascular endothelial cells, inducing degradation of sialic acid and shedding of heparan sulfate proteoglycans. NS1 induces expression of sialidases, heparanase, and activates cathepsin L, which activates heparanase via enzymatic cleavage. These effects are probably linked to the endothelial hyperpermeability observed in severe dengue disease. Component of the viral RNA replication complex that functions in virion assembly and antagonizes the host immune response. Its function is as follows. Required cofactor for the serine protease function of NS3. May have membrane-destabilizing activity and form viroporins. Functionally, displays three enzymatic activities: serine protease, NTPase and RNA helicase. NS3 serine protease, in association with NS2B, performs its autocleavage and cleaves the polyprotein at dibasic sites in the cytoplasm: C-prM, NS2A-NS2B, NS2B-NS3, NS3-NS4A, NS4A-2K and NS4B-NS5. NS3 RNA helicase binds RNA and unwinds dsRNA in the 3' to 5' direction. In terms of biological role, regulates the ATPase activity of the NS3 helicase activity. NS4A allows NS3 helicase to conserve energy during unwinding. Plays a role in the inhibition of the host innate immune response. Interacts with host MAVS and thereby prevents the interaction between RIGI and MAVS. In turn, IFN-beta production is impaired. Interacts with host AUP1 which mediates induction of lipophagy in host cells and facilitates production of virus progeny particles. Functions as a signal peptide for NS4B and is required for the interferon antagonism activity of the latter. Its function is as follows. Induces the formation of ER-derived membrane vesicles where the viral replication takes place. Inhibits interferon (IFN)-induced host STAT1 phosphorylation and nuclear translocation, thereby preventing the establishment of cellular antiviral state by blocking the IFN-alpha/beta pathway. Functionally, replicates the viral (+) and (-) RNA genome, and performs the capping of genomes in the cytoplasm. NS5 methylates viral RNA cap at guanine N-7 and ribose 2'-O positions. Besides its role in RNA genome replication, also prevents the establishment of cellular antiviral state by blocking the interferon-alpha/beta (IFN-alpha/beta) signaling pathway. Inhibits host TYK2 and STAT2 phosphorylation, thereby preventing activation of JAK-STAT signaling pathway. May reduce immune responses by preventing the recruitment of the host PAF1 complex to interferon-responsive genes. This is Genome polyprotein from Dengue virus type 4 (strain Thailand/0348/1991) (DENV-4).